A 354-amino-acid chain; its full sequence is Uroporphyrinogen decarboxylase (354 aa).

Substrate is bound by residues 27-31 (RQAGR), Phe46, Asp77, Tyr154, Thr209, and His327.

It belongs to the uroporphyrinogen decarboxylase family. As to quaternary structure, homodimer.

The protein localises to the cytoplasm. The catalysed reaction is uroporphyrinogen III + 4 H(+) = coproporphyrinogen III + 4 CO2. It functions in the pathway porphyrin-containing compound metabolism; protoporphyrin-IX biosynthesis; coproporphyrinogen-III from 5-aminolevulinate: step 4/4. Functionally, catalyzes the decarboxylation of four acetate groups of uroporphyrinogen-III to yield coproporphyrinogen-III. This is Uroporphyrinogen decarboxylase from Salmonella typhi.